A 141-amino-acid chain; its full sequence is Hemoglobin subunit alpha-D (141 aa).

In terms of domain architecture, Globin spans 1–141 (MLTEDDKQLI…VSAVLAEKYR (141 aa)). Residues His58 and His87 each coordinate heme b.

Belongs to the globin family. As to quaternary structure, heterotetramer of two alpha-D chains and two beta chains. In terms of tissue distribution, red blood cells.

Involved in oxygen transport from the lung to the various peripheral tissues. The protein is Hemoglobin subunit alpha-D (HBAD) of Chelonoidis niger (Galapagos giant tortoise).